Here is a 1048-residue protein sequence, read N- to C-terminus: Probable histidine kinase 2 (1048 aa).

Topologically, residues 1–16 (MREVEEVSKWRRRCCY) are cytoplasmic. A helical membrane pass occupies residues 17-37 (FWILFPLAVIATCMTITVVTF). Over 38 to 336 (CSSTMYMTEV…AMVGVFRRGG (299 aa)) the chain is Extracellular. A helical transmembrane segment spans residues 337–357 (VTMVAVACAAAAAATVACVLM). The Cytoplasmic segment spans residues 358-1048 (ARALRRAVAR…AVHGVCKGKN (691 aa)). One can recognise a Histidine kinase domain in the interval 398–662 (SASHDIRSAL…CFGFNVLLKT (265 aa)). Histidine 401 is subject to Phosphohistidine; by autocatalysis. The region spanning 912 to 1044 (HVLLVEDTLV…RIVEAVHGVC (133 aa)) is the Response regulatory domain. Aspartate 975 is modified (4-aspartylphosphate).

In terms of processing, activation probably requires a transfer of a phosphate group between a His in the transmitter domain and an Asp of the receiver domain.

It is found in the cell membrane. It catalyses the reaction ATP + protein L-histidine = ADP + protein N-phospho-L-histidine.. Its function is as follows. Cytokinin receptor related to bacterial two-component regulators. Functions as a histidine kinase and transmits the stress signal to a downstream MAPK cascade. This is Probable histidine kinase 2 from Oryza sativa subsp. indica (Rice).